The primary structure comprises 172 residues: Shikimate kinase (172 aa).

Position 11–16 (Gly11–Thr16) interacts with ATP. Thr15 provides a ligand contact to Mg(2+). Substrate-binding residues include Asp33, Arg57, and Gly79. Arg117 is a binding site for ATP. A substrate-binding site is contributed by Arg136.

It belongs to the shikimate kinase family. In terms of assembly, monomer. The cofactor is Mg(2+).

The protein resides in the cytoplasm. It catalyses the reaction shikimate + ATP = 3-phosphoshikimate + ADP + H(+). It participates in metabolic intermediate biosynthesis; chorismate biosynthesis; chorismate from D-erythrose 4-phosphate and phosphoenolpyruvate: step 5/7. Catalyzes the specific phosphorylation of the 3-hydroxyl group of shikimic acid using ATP as a cosubstrate. The sequence is that of Shikimate kinase from Caldicellulosiruptor saccharolyticus (strain ATCC 43494 / DSM 8903 / Tp8T 6331).